The following is a 280-amino-acid chain: UDP-3-O-acyl-N-acetylglucosamine deacetylase (280 aa).

Residues His79, His237, and Asp241 each coordinate Zn(2+). Residue His264 is the Proton donor of the active site.

It belongs to the LpxC family. Zn(2+) is required as a cofactor.

The enzyme catalyses a UDP-3-O-[(3R)-3-hydroxyacyl]-N-acetyl-alpha-D-glucosamine + H2O = a UDP-3-O-[(3R)-3-hydroxyacyl]-alpha-D-glucosamine + acetate. It functions in the pathway glycolipid biosynthesis; lipid IV(A) biosynthesis; lipid IV(A) from (3R)-3-hydroxytetradecanoyl-[acyl-carrier-protein] and UDP-N-acetyl-alpha-D-glucosamine: step 2/6. Catalyzes the hydrolysis of UDP-3-O-myristoyl-N-acetylglucosamine to form UDP-3-O-myristoylglucosamine and acetate, the committed step in lipid A biosynthesis. The polypeptide is UDP-3-O-acyl-N-acetylglucosamine deacetylase (Chlamydia abortus (strain DSM 27085 / S26/3) (Chlamydophila abortus)).